Consider the following 375-residue polypeptide: MGELGEHRASLLSNPIPEVKTLGELKQGQNNGNLDLESEPFGSHWLQGSKATTGRTSEEPEEEIPPEEMAGEELPETSNLDGPLQQDLEVEVVEMSHLSITERTPSVSTAKGRKKRSRRLLELAKPKTNWQCLRDRTGRCCKGYAWISPRKTNLQFCLYWPSVYWTERFIEDTTLTITVPVVSQRMEELSRPKRFYQEYYNNNRTTPIWSIPRSTLEYQASNRLKQLATPKVRNNIWSINMSEVSQVSRAAQMAVPTPRTLRLAKPRPPATLLEEWDPMPKPKPYVSDYNRLLQLATPKALSEKCVPDRSPQWEVLDVTKNAVASSRIISLAQPKIRKDLNEGYNPYYISPASLVAQASPRIYELATPKYITKKV.

The tract at residues M1 to S78 is disordered. The segment covering E59 to P75 has biased composition (acidic residues). THEG repeat units lie at residues A110–N129, T176–F195, S214–R233, A250–P269, P282–L301, V318–R337, and A352–I371. S287 carries the phosphoserine modification.

Interacts with CCT5. Testis specific (at protein level). Specifically expressed in spermatids; Sertoli cells maintain the level of expression in spermatids. If isolated spermatids are cultivated for 16 hours alone, the expression of THEG is down-regulated. May require signals from Sertoli cells to initiate changes in its gene expression through spermatogenesis.

It is found in the nucleus. May be involved (but not essential) in spermatogenesis. The polypeptide is Sperm microtubule associated protein 2 (Mus musculus (Mouse)).